The chain runs to 446 residues: D(1A) dopamine receptor (446 aa).

The Extracellular segment spans residues 1 to 22 (MPLNDTTMDRRGLVVERDFSFR). Asn4 is a glycosylation site (N-linked (GlcNAc...) asparagine). A helical transmembrane segment spans residues 23–48 (ILTACFLSLLILSTLLGNTLVCAAVI). Topologically, residues 49–59 (RFRHLRSKVTN) are cytoplasmic. A helical transmembrane segment spans residues 60 to 86 (FFVISLAVSDLLVAVLVMPWKAVAEIA). Topologically, residues 87-95 (GFWPFGSFC) are extracellular. Cys95 and Cys185 form a disulfide bridge. Residues 96–118 (NIWVAFDIMCSTASILNLCVISV) traverse the membrane as a helical segment. Residues 119–137 (DRYWAISSPFRYERKMTPK) lie on the Cytoplasmic side of the membrane. Residues 138–162 (AAFILISVAWTLSVLISFIPVQLNW) form a helical membrane-spanning segment. At 163–191 (HKARPLSSPDGNVSSQDETMDNCDSSLSR) the chain is on the extracellular side. Residues 192-217 (TYAISSSLISFYIPVAIMIVTYTRIY) traverse the membrane as a helical segment. Residues 218 to 271 (RIAQKQIRRISALERAAVHAKNCQNTTGNGANVECSQPESSFKMSFKRETKVLK) are Cytoplasmic-facing. A helical membrane pass occupies residues 272 to 298 (TLSVIMGVFVCCWLPFFILNCMVPFCE). Topologically, residues 299–315 (SDLPSGETKPFCIDSIT) are extracellular. The helical transmembrane segment at 316 to 340 (FDVFVWFGWANSSLNPIIYAFNADF) threads the bilayer. At 341 to 446 (RKAFSTLLGC…PITQNGQHKT (106 aa)) the chain is on the cytoplasmic side. 2 S-palmitoyl cysteine lipidation sites follow: Cys350 and Cys354.

This sequence belongs to the G-protein coupled receptor 1 family. In terms of assembly, interacts with DNAJC14 via its C-terminus.

The protein resides in the cell membrane. It localises to the endoplasmic reticulum membrane. The protein localises to the cell projection. It is found in the cilium membrane. Its subcellular location is the dendrite. The protein resides in the dendritic spine. In terms of biological role, this is one of the five types (D1 to D5) of receptors for dopamine. The activity of this receptor is mediated by G proteins which activate adenylyl cyclase. The sequence is that of D(1A) dopamine receptor (DRD1) from Didelphis virginiana (North American opossum).